A 432-amino-acid polypeptide reads, in one-letter code: D-amino acid dehydrogenase (432 aa).

FAD is bound at residue 3–17 (VVILGSGVVGVTSAW).

This sequence belongs to the DadA oxidoreductase family. The cofactor is FAD.

It carries out the reaction a D-alpha-amino acid + A + H2O = a 2-oxocarboxylate + AH2 + NH4(+). It participates in amino-acid degradation; D-alanine degradation; NH(3) and pyruvate from D-alanine: step 1/1. Functionally, oxidative deamination of D-amino acids. This is D-amino acid dehydrogenase from Salmonella arizonae (strain ATCC BAA-731 / CDC346-86 / RSK2980).